Here is an 81-residue protein sequence, read N- to C-terminus: Acyl carrier protein (81 aa).

Residues 2-77 (ASVEEKVKQI…DAVDYITAHA (76 aa)) form the Carrier domain. Ser-37 is modified (O-(pantetheine 4'-phosphoryl)serine).

It belongs to the acyl carrier protein (ACP) family. 4'-phosphopantetheine is transferred from CoA to a specific serine of apo-ACP by AcpS. This modification is essential for activity because fatty acids are bound in thioester linkage to the sulfhydryl of the prosthetic group.

Its subcellular location is the cytoplasm. The protein operates within lipid metabolism; fatty acid biosynthesis. Carrier of the growing fatty acid chain in fatty acid biosynthesis. The chain is Acyl carrier protein from Koribacter versatilis (strain Ellin345).